The chain runs to 707 residues: UvrABC system protein C (707 aa).

The GIY-YIG domain occupies 14–94 (AEPGCYLMKD…IKKHRPRFNV (81 aa)). Residues 206–241 (GELVERLRGRMAGAAEGLRFEEAARLRDQLQAVERS) enclose the UVR domain. The tract at residues 655 to 707 (DAPPIAADEPSGAPAGAPGGGPAEASPEAVAAATEAEIDAALADEDASPEPAA) is disordered. 2 stretches are compositionally biased toward low complexity: residues 660-670 (AADEPSGAPAG) and 677-689 (AEAS…AATE). Over residues 690-707 (AEIDAALADEDASPEPAA) the composition is skewed to acidic residues.

Belongs to the UvrC family. Interacts with UvrB in an incision complex.

Its subcellular location is the cytoplasm. Its function is as follows. The UvrABC repair system catalyzes the recognition and processing of DNA lesions. UvrC both incises the 5' and 3' sides of the lesion. The N-terminal half is responsible for the 3' incision and the C-terminal half is responsible for the 5' incision. In Anaeromyxobacter dehalogenans (strain 2CP-1 / ATCC BAA-258), this protein is UvrABC system protein C.